A 1209-amino-acid polypeptide reads, in one-letter code: DNA-directed RNA polymerase subunit beta (1209 aa).

A compositionally biased stretch (basic and acidic residues) spans 1173–1192 (QQEKKKLAEEAAKKDDKPDE). Residues 1173 to 1209 (QQEKKKLAEEAAKKDDKPDEPVDESDSSTSSDDKVSK) are disordered.

Belongs to the RNA polymerase beta chain family. As to quaternary structure, the RNAP catalytic core consists of 2 alpha, 1 beta, 1 beta' and 1 omega subunit. When a sigma factor is associated with the core the holoenzyme is formed, which can initiate transcription.

The catalysed reaction is RNA(n) + a ribonucleoside 5'-triphosphate = RNA(n+1) + diphosphate. Its function is as follows. DNA-dependent RNA polymerase catalyzes the transcription of DNA into RNA using the four ribonucleoside triphosphates as substrates. This is DNA-directed RNA polymerase subunit beta from Lactobacillus johnsonii (strain CNCM I-12250 / La1 / NCC 533).